The following is a 396-amino-acid chain: Putative nickel insertion protein (396 aa).

This sequence belongs to the LarC family.

This is Putative nickel insertion protein from Methanosarcina mazei (strain ATCC BAA-159 / DSM 3647 / Goe1 / Go1 / JCM 11833 / OCM 88) (Methanosarcina frisia).